A 557-amino-acid chain; its full sequence is Organic cation/carnitine transporter 2 (557 aa).

Residues 1–20 lie on the Cytoplasmic side of the membrane; it reads MRDYDEVTAFLGEWGPFQRL. The helical transmembrane segment at 21–41 threads the bilayer; sequence IFFLLSASIIPNGFTGLSSVF. Residues 42–142 lie on the Extracellular side of the membrane; that stretch reads LIATPEHRCR…NLVCEDDWKA (101 aa). N-linked (GlcNAc...) asparagine glycosylation is found at Asn57, Asn64, and Asn91. A helical membrane pass occupies residues 143 to 163; it reads PLTISLFFVGVLLGSFISGQL. Over 164 to 172 the chain is Cytoplasmic; that stretch reads SDRFGRKNV. The helical transmembrane segment at 173-193 threads the bilayer; sequence LFVTMGMQTGFSFLQIFSKNF. At 194–197 the chain is on the extracellular side; the sequence is EMFV. Residues 198–218 traverse the membrane as a helical segment; that stretch reads VLFVLVGMGQISNYVAAFVLG. 218-225 contributes to the ATP binding site; sequence GTEILGKS. The Cytoplasmic portion of the chain corresponds to 219–232; the sequence is TEILGKSVRIIFST. The chain crosses the membrane as a helical span at residues 233–253; it reads LGVCIFYAFGYMVLPLFAYFI. At 254–257 the chain is on the extracellular side; that stretch reads RDWR. The helical transmembrane segment at 258 to 278 threads the bilayer; the sequence is MLLVALTMPGVLCVALWWFIP. Over 279-341 the chain is Cytoplasmic; it reads ESPRWLISQG…LDLLRTWNIR (63 aa). A helical transmembrane segment spans residues 342-362; it reads MVTIMSIMLWMTISVGYFGLS. The Extracellular segment spans residues 363–373; it reads LDTPNLHGDIF. A helical membrane pass occupies residues 374–394; the sequence is VNCFLSAMVEVPAYVLAWLLL. Residues 395–406 are Cytoplasmic-facing; that stretch reads QYLPRRYSMATA. The helical transmembrane segment at 407–427 threads the bilayer; that stretch reads LFLGGSVLLFMQLVPPDLYYL. Over 428–430 the chain is Extracellular; sequence ATV. A helical transmembrane segment spans residues 431 to 451; the sequence is LVMVGKFGVTAAFSMVYVYTA. The Cytoplasmic segment spans residues 452 to 462; that stretch reads ELYPTVVRNMG. A helical transmembrane segment spans residues 463–483; that stretch reads VGVSSTASRLGSILSPYFVYL. Topologically, residues 484 to 488 are extracellular; it reads GAYDR. Tyr486 bears the Phosphotyrosine mark. The helical transmembrane segment at 489-509 threads the bilayer; that stretch reads FLPYILMGSLTILTAILTLFL. The disordered stretch occupies residues 535–557; sequence TPSHTRMLKDGQERPTILKSTAF. Phosphothreonine is present on Thr550.

Belongs to the major facilitator (TC 2.A.1) superfamily. Organic cation transporter (TC 2.A.1.19) family. Interacts with PDZK1. Glycosylated. Glycosylation affects the expression levels. Post-translationally, not glycosylated. Strongly expressed in kidney, skeletal muscle, heart and placenta. Primarily expressed by surface epithelial cells of the colon (at protein level). Expressed in CD68 macrophage and CD43 T-cells but not in CD20 B-cells. In testis, localized to Sertoli cell basal membranes, peritubular myoid cells and Leydig cells.

The protein localises to the cell membrane. It localises to the apical cell membrane. Its subcellular location is the basal cell membrane. The protein resides in the endoplasmic reticulum. The catalysed reaction is (R)-carnitine(out) + Na(+)(out) = (R)-carnitine(in) + Na(+)(in). It catalyses the reaction glycine betaine(out) + Na(+)(out) = glycine betaine(in) + Na(+)(in). The enzyme catalyses glycine betaine(out) + (R)-carnitine(in) = glycine betaine(in) + (R)-carnitine(out). It carries out the reaction O-butanoyl-(R)-carnitine(out) + Na(+)(out) = O-butanoyl-(R)-carnitine(in) + Na(+)(in). The catalysed reaction is O-acetyl-(R)-carnitine(out) + Na(+)(out) = O-acetyl-(R)-carnitine(in) + Na(+)(in). It catalyses the reaction O-propanoyl-(R)-carnitine(out) + Na(+)(out) = O-propanoyl-(R)-carnitine(in) + Na(+)(in). The enzyme catalyses (S)-carnitine(out) + Na(+)(out) = (S)-carnitine(in) + Na(+)(in). It carries out the reaction an O-acyl-(R)-carnitine(out) + Na(+)(out) = an O-acyl-(R)-carnitine(in) + Na(+)(in). The catalysed reaction is L-glutamyl-L-arginyl-glycyl-L-methionyl-L-threonine(out) + Na(+)(out) = L-glutamyl-L-arginyl-glycyl-L-methionyl-L-threonine(in) + Na(+)(in). It catalyses the reaction N,N-dimethylglycine(out) + Na(+)(out) = N,N-dimethylglycine(in) + Na(+)(in). Inhibited by emetine, quinidine and verapamil. The IC(50) of emetine is 4.2 uM. Not inhibited by valproic acid. Transport of (R)-carnitine is stimulated by cholesterol in the plasma membrane. Functionally, sodium-ion dependent, high affinity carnitine transporter. Involved in the active cellular uptake of carnitine. Transports one sodium ion with one molecule of carnitine. Also transports organic cations such as tetraethylammonium (TEA) without the involvement of sodium. Relative uptake activity ratio of carnitine to TEA is 11.3. In intestinal epithelia, transports the quorum-sensing pentapeptide CSF (competence and sporulation factor) from B.subtilis which induces cytoprotective heat shock proteins contributing to intestinal homeostasis. May also contribute to regulate the transport of organic compounds in testis across the blood-testis-barrier. In terms of biological role, retained in the ER, unable to perform carnitine uptake. This is Organic cation/carnitine transporter 2 from Homo sapiens (Human).